The primary structure comprises 790 residues: Endonuclease MutS2 (790 aa).

Residue 334 to 341 (GPNTGGKT) participates in ATP binding. The 76-residue stretch at 713–788 (LDVRGMTLDD…GDGVTIVELH (76 aa)) folds into the Smr domain.

This sequence belongs to the DNA mismatch repair MutS family. MutS2 subfamily. As to quaternary structure, homodimer. Binds to stalled ribosomes, contacting rRNA.

In terms of biological role, endonuclease that is involved in the suppression of homologous recombination and thus may have a key role in the control of bacterial genetic diversity. Functionally, acts as a ribosome collision sensor, splitting the ribosome into its 2 subunits. Detects stalled/collided 70S ribosomes which it binds and splits by an ATP-hydrolysis driven conformational change. Acts upstream of the ribosome quality control system (RQC), a ribosome-associated complex that mediates the extraction of incompletely synthesized nascent chains from stalled ribosomes and their subsequent degradation. Probably generates substrates for RQC. The chain is Endonuclease MutS2 from Caldanaerobacter subterraneus subsp. tengcongensis (strain DSM 15242 / JCM 11007 / NBRC 100824 / MB4) (Thermoanaerobacter tengcongensis).